We begin with the raw amino-acid sequence, 782 residues long: Lysosome membrane protein 2-C (782 aa).

The Cytoplasmic segment spans residues 1-7; that stretch reads MVANNKG. Residues 8–28 form a helical membrane-spanning segment; that stretch reads LLIAGLLLSVIGAALFVISLA. At 29 to 739 the chain is on the lumenal side; that stretch reads LLPSVLNVAT…QQFKQIQTVK (711 aa). N-linked (GlcNAc...) asparagine glycans are attached at residues asparagine 77, asparagine 105, asparagine 191, asparagine 219, asparagine 234, asparagine 243, asparagine 281, asparagine 368, asparagine 387, asparagine 401, asparagine 427, asparagine 432, asparagine 451, asparagine 465, asparagine 501, asparagine 536, asparagine 540, asparagine 595, asparagine 605, asparagine 613, asparagine 646, and asparagine 692. The helical transmembrane segment at 740-760 threads the bilayer; sequence IAPVVVVSIFGGILLIAGLVM. At 761-782 the chain is on the cytoplasmic side; that stretch reads AINGFRKTFYNNNQYNGYNIIN. Residues 777–781 carry the Tyrosine-type lysosomal sorting signal motif; it reads GYNII.

This sequence belongs to the CD36 family. Post-translationally, heavily glycosylated.

The protein localises to the lysosome membrane. May act as a lysosomal receptor. May be involved role in macropinocytosis and fluid phase exocytosis. This chain is Lysosome membrane protein 2-C (lmpC), found in Dictyostelium discoideum (Social amoeba).